The following is a 103-amino-acid chain: Small ribosomal subunit protein uS10 (103 aa).

Belongs to the universal ribosomal protein uS10 family. In terms of assembly, part of the 30S ribosomal subunit.

In terms of biological role, involved in the binding of tRNA to the ribosomes. This is Small ribosomal subunit protein uS10 from Actinobacillus pleuropneumoniae serotype 5b (strain L20).